We begin with the raw amino-acid sequence, 229 residues long: Ribonuclease T (229 aa).

The Exonuclease domain occupies Val-23–Phe-197. Mg(2+)-binding residues include Asp-26, Glu-28, His-184, and Asp-189. Catalysis depends on His-184, which acts as the Proton donor/acceptor.

The protein belongs to the RNase T family. In terms of assembly, homodimer. It depends on Mg(2+) as a cofactor.

Trims short 3' overhangs of a variety of RNA species, leaving a one or two nucleotide 3' overhang. Responsible for the end-turnover of tRNA: specifically removes the terminal AMP residue from uncharged tRNA (tRNA-C-C-A). Also appears to be involved in tRNA biosynthesis. This chain is Ribonuclease T, found in Haemophilus influenzae (strain 86-028NP).